The primary structure comprises 205 residues: Basigin (205 aa).

A signal peptide spans methionine 1–glycine 18. The Ig-like C2-type domain maps to alanine 19 to glycine 103. Residues alanine 19–histidine 205 are Extracellular-facing. 2 cysteine pairs are disulfide-bonded: cysteine 41-cysteine 87 and cysteine 126-cysteine 185. N-linked (GlcNAc...) asparagine glycans are attached at residues asparagine 44, asparagine 152, and asparagine 186. In terms of domain architecture, Ig-like V-type spans proline 105–threonine 199.

In terms of assembly, homooligomer. Interacts with VEGFA, KDR/VEGFR2, PPIA/CYPA, SLC16A12, SLC16A11, ATP1B2, MAG, L1CAM and AJAP1. Interacts with SLC16A1; interaction mediates SLC16A1 targeting to the plasma membrane. Interacts with SLC16A3; interaction mediates SLC16A3 targeting to the plasma membrane. Interacts with PPIL2; regulates BSG transport to the cell membrane. Interacts with XKR8; promoting its localization at the cell membrane. Interacts with SLC16A6; this interaction mediates targeting to the plasma membrane.

Its subcellular location is the cell membrane. The protein resides in the endoplasmic reticulum membrane. The protein localises to the basolateral cell membrane. Its function is as follows. Signaling receptor for cyclophilins, essential for PPIA/CYPA and PPIB/CYPB-dependent signaling related to chemotaxis and adhesion of immune cells. Plays an important role in targeting the monocarboxylate transporters SLC16A1/GLUT1, SLC16A3, SLC16A8, SLC16A11 and SLC16A12 to the plasma membrane. Acts as a coreceptor for vascular endothelial growth factor receptor 2 (KDR/VEGFR2) in endothelial cells enhancing its VEGFA-mediated activation and downstream signaling. Promotes angiogenesis through EPAS1/HIF2A-mediated up-regulation of VEGFA and KDR/VEGFR2 in endothelial cells. In Bos taurus (Bovine), this protein is Basigin (BSG).